The chain runs to 156 residues: Transcriptional repressor NrdR (156 aa).

A zinc finger lies at 3–34 (CPFCQHDDTQVLDTRISEEGDSIRRRRRCVSC). The ATP-cone domain maps to 49–139 (PVIVKKNGSR…VYKSFEDVAE (91 aa)).

It belongs to the NrdR family. Zn(2+) serves as cofactor.

In terms of biological role, negatively regulates transcription of bacterial ribonucleotide reductase nrd genes and operons by binding to NrdR-boxes. This is Transcriptional repressor NrdR from Herminiimonas arsenicoxydans.